A 306-amino-acid chain; its full sequence is Extensin (306 aa).

A signal peptide spans 1-32 (MGRIARGSKMSSLIVSLLVVLVSLNLASETTA). Positions 33–306 (KYTYSSPPPP…YTSPPPPHHY (274 aa)) are disordered. 4 stretches are compositionally biased toward pro residues: residues 38–122 (SPPP…PKHS), 133–152 (SPPP…PKHS), 183–214 (SPPP…PKHS), and 225–290 (SPPP…SPPP).

Hydroxylated on proline residues in the S-P-P-P-P repeat. In terms of processing, O-glycosylated on hydroxyprolines.

Its subcellular location is the secreted. It is found in the primary cell wall. In terms of biological role, structural component in primary cell wall. This chain is Extensin, found in Daucus carota (Wild carrot).